Here is a 97-residue protein sequence, read N- to C-terminus: Large ribosomal subunit protein eL21 (97 aa).

This sequence belongs to the eukaryotic ribosomal protein eL21 family.

The protein is Large ribosomal subunit protein eL21 of Methanococcus aeolicus (strain ATCC BAA-1280 / DSM 17508 / OCM 812 / Nankai-3).